The primary structure comprises 269 residues: Eukaryotic translation initiation factor 3 subunit G-1 (269 aa).

The 79-residue stretch at 188–266 (AAIRISNLSE…LILSVEWSKP (79 aa)) folds into the RRM domain.

The protein belongs to the eIF-3 subunit G family. In terms of assembly, component of the eukaryotic translation initiation factor 3 (eIF-3) complex. The eIF-3 complex interacts with pix.

The protein localises to the cytoplasm. Its function is as follows. RNA-binding component of the eukaryotic translation initiation factor 3 (eIF-3) complex, which is involved in protein synthesis of a specialized repertoire of mRNAs and, together with other initiation factors, stimulates binding of mRNA and methionyl-tRNAi to the 40S ribosome. The eIF-3 complex specifically targets and initiates translation of a subset of mRNAs involved in cell proliferation. This subunit can bind 18S rRNA. This Drosophila sechellia (Fruit fly) protein is Eukaryotic translation initiation factor 3 subunit G-1.